The sequence spans 35 residues: Kappa-theraphotoxin-Tb1a (35 aa).

Cystine bridges form between Cys3–Cys18, Cys10–Cys23, and Cys17–Cys30.

The protein belongs to the neurotoxin 10 (Hwtx-1) family. 59 (Tltx) subfamily. As to quaternary structure, monomer. Expressed by the venom gland.

The protein localises to the secreted. Blocks Kv4.2/KCND2 voltage-gated potassium channels (IC(50) is 193.0 nM) by shifting the voltage-dependence of channel activation to more depolarized potentials. The toxin is thought to bind to the S3-S4 linker region of the voltage sensor domain. The chain is Kappa-theraphotoxin-Tb1a from Theraphosa blondi (Goliath birdeating spider).